Reading from the N-terminus, the 241-residue chain is Cytochrome b6-f complex iron-sulfur subunit 2, cyanelle (241 aa).

The transit peptide at 1 to 62 (MSAFACSAVA…AAKATTFSIS (62 aa)) directs the protein to the cyanelle. The helical transmembrane segment at 83–103 (LLGAIAGPTIGAGGPFVSFLV) threads the bilayer. Residues 127 to 223 (VEKWLETXKP…VNVLEDGVVA (97 aa)) enclose the Rieske domain. [2Fe-2S] cluster is bound by residues cysteine 169, histidine 171, cysteine 187, and histidine 190. A disulfide bond links cysteine 174 and cysteine 189.

This sequence belongs to the Rieske iron-sulfur protein family. The 4 large subunits of the cytochrome b6-f complex are cytochrome b6, subunit IV (17 kDa polypeptide, petD), cytochrome f and the Rieske protein, while the 4 small subunits are petG, petL, petM and petN. The complex functions as a dimer. Requires [2Fe-2S] cluster as cofactor.

The protein localises to the plastid. The protein resides in the cyanelle thylakoid membrane. The enzyme catalyses 2 oxidized [plastocyanin] + a plastoquinol + 2 H(+)(in) = 2 reduced [plastocyanin] + a plastoquinone + 4 H(+)(out). In terms of biological role, component of the cytochrome b6-f complex, which mediates electron transfer between photosystem II (PSII) and photosystem I (PSI), cyclic electron flow around PSI, and state transitions. The polypeptide is Cytochrome b6-f complex iron-sulfur subunit 2, cyanelle (petC-2) (Cyanophora paradoxa).